Here is a 112-residue protein sequence, read N- to C-terminus: Protein preY, mitochondrial (112 aa).

Residues 1–34 (MLSATCRRLAPALRRLRALSAVAGRFLQVPGARL) constitute a mitochondrion transit peptide. A TRM112 domain is found at 49-95 (HPALLQFLVCPLSKKPLRYEASTNELVNEELGIAYPIIDGIPNMIPQ).

The protein belongs to the PREY family. In terms of assembly, interacts (via TRM112 domain) with NDUFAF5; the interaction is direct and stabilizes NDUFAF5 protein. Interacts with COQ5; the interaction is direct, stabilizes COQ5 protein and associates PYURF with COQ enzyme complex.

It is found in the mitochondrion. In terms of biological role, in mitochondria, S-adenosylmethionine-dependent methyltransferase chaperone that supports both coenzyme Q biosynthesis, by stabilizing its components, such as COQ5, and NADH:ubiquinone oxidoreductase complex (complex I, MT-ND1) assembly, by stabilizing complex I assembly factors, such as NDUFAF5. In Mus musculus (Mouse), this protein is Protein preY, mitochondrial (Pyurf).